A 157-amino-acid polypeptide reads, in one-letter code: Endoribonuclease YbeY (157 aa).

The Zn(2+) site is built by His114, His118, and His124.

This sequence belongs to the endoribonuclease YbeY family. It depends on Zn(2+) as a cofactor.

The protein resides in the cytoplasm. Single strand-specific metallo-endoribonuclease involved in late-stage 70S ribosome quality control and in maturation of the 3' terminus of the 16S rRNA. In Yersinia enterocolitica serotype O:8 / biotype 1B (strain NCTC 13174 / 8081), this protein is Endoribonuclease YbeY.